The sequence spans 47 residues: Delta-ctenitoxin-Asp2e (47 aa).

5 cysteine pairs are disulfide-bonded: cysteine 3–cysteine 17, cysteine 10–cysteine 23, cysteine 14–cysteine 46, cysteine 16–cysteine 31, and cysteine 25–cysteine 29.

Expressed by the venom gland.

It localises to the secreted. In terms of biological role, inhibits the inactivation of voltage-gated sodium channels (Nav). This Ancylometes sp. (South American fishing spider) protein is Delta-ctenitoxin-Asp2e.